We begin with the raw amino-acid sequence, 335 residues long: Putative peroxisomal biogenesis factor 19 (335 aa).

Disordered regions lie at residues 14-70 (LETQ…LGND) and 104-124 (YNKDINNNSDDSNNGGLPSEE). Composition is skewed to low complexity over residues 22–55 (PTTTKTTTTTTTTTTSNTTKTINNNNNTVTPSTI) and 109–119 (NNNSDDSNNGG).

The protein belongs to the peroxin-19 family.

It is found in the peroxisome. The polypeptide is Putative peroxisomal biogenesis factor 19 (pex19) (Dictyostelium discoideum (Social amoeba)).